Consider the following 506-residue polypeptide: AMP phosphorylase (506 aa).

AMP is bound by residues Gly-167, 193–198 (SRAITG), and Thr-202. The Proton donor role is filled by Asp-255. AMP is bound by residues Ser-263 and Lys-287.

This sequence belongs to the thymidine/pyrimidine-nucleoside phosphorylase family. Type 2 subfamily.

The enzyme catalyses AMP + phosphate = alpha-D-ribose 1,5-bisphosphate + adenine. It carries out the reaction CMP + phosphate = cytosine + alpha-D-ribose 1,5-bisphosphate. The catalysed reaction is UMP + phosphate = alpha-D-ribose 1,5-bisphosphate + uracil. Its function is as follows. Catalyzes the conversion of AMP and phosphate to adenine and ribose 1,5-bisphosphate (R15P). Exhibits phosphorylase activity toward CMP and UMP in addition to AMP. Functions in an archaeal AMP degradation pathway, together with R15P isomerase and RubisCO. This chain is AMP phosphorylase, found in Methanosarcina barkeri (strain Fusaro / DSM 804).